Reading from the N-terminus, the 303-residue chain is Elongation factor Ts (303 aa).

Residues 79–82 form an involved in Mg(2+) ion dislocation from EF-Tu region; the sequence is TDFV.

The protein belongs to the EF-Ts family.

The protein resides in the cytoplasm. Its function is as follows. Associates with the EF-Tu.GDP complex and induces the exchange of GDP to GTP. It remains bound to the aminoacyl-tRNA.EF-Tu.GTP complex up to the GTP hydrolysis stage on the ribosome. In Syntrophotalea carbinolica (strain DSM 2380 / NBRC 103641 / GraBd1) (Pelobacter carbinolicus), this protein is Elongation factor Ts.